The following is a 105-amino-acid chain: MRSIFYFALAFAALTCSNASAAFPNPDETRLLPDTFTKRSLRVAGQEVARGDRGEEIVRVIVQSTNKIFKRPAEKDMSKLIAAAKIAMLEKKMAKLSFVGKKAAK.

The signal sequence occupies residues 1 to 21 (MRSIFYFALAFAALTCSNASA). A RxLR-dEER motif is present at residues 39–57 (RSLRVAGQEVARGDRGEEI).

It belongs to the RxLR effector family.

The protein localises to the secreted. It localises to the host nucleus. It is found in the host nucleolus. Its subcellular location is the host cytoplasm. Functionally, effector that enhances P.infestans colonization of Nicotiana benthamiana leaves. The sequence is that of RxLR effector protein PITG_18670 from Phytophthora infestans (strain T30-4) (Potato late blight agent).